A 245-amino-acid chain; its full sequence is 1-(5-phosphoribosyl)-5-[(5-phosphoribosylamino)methylideneamino] imidazole-4-carboxamide isomerase (245 aa).

Asp-7 (proton acceptor) is an active-site residue. Asp-129 acts as the Proton donor in catalysis.

The protein belongs to the HisA/HisF family.

The protein resides in the cytoplasm. It carries out the reaction 1-(5-phospho-beta-D-ribosyl)-5-[(5-phospho-beta-D-ribosylamino)methylideneamino]imidazole-4-carboxamide = 5-[(5-phospho-1-deoxy-D-ribulos-1-ylimino)methylamino]-1-(5-phospho-beta-D-ribosyl)imidazole-4-carboxamide. It functions in the pathway amino-acid biosynthesis; L-histidine biosynthesis; L-histidine from 5-phospho-alpha-D-ribose 1-diphosphate: step 4/9. The protein is 1-(5-phosphoribosyl)-5-[(5-phosphoribosylamino)methylideneamino] imidazole-4-carboxamide isomerase of Shewanella oneidensis (strain ATCC 700550 / JCM 31522 / CIP 106686 / LMG 19005 / NCIMB 14063 / MR-1).